Reading from the N-terminus, the 311-residue chain is Non-homologous end joining protein Ku (311 aa).

In terms of domain architecture, Ku spans 26–210 (ISFGLVNIPI…NVNDKELQTA (185 aa)). The disordered stretch occupies residues 269-311 (ASIDRTRRPNRETPAAAPAQAAEPKGAGDKKQKTTRKKASGTS). Low complexity predominate over residues 282-293 (PAAAPAQAAEPK). Positions 301–311 (KTTRKKASGTS) are enriched in basic residues.

The protein belongs to the prokaryotic Ku family. As to quaternary structure, homodimer. Interacts with LigD.

The protein localises to the spore core. In terms of biological role, with LigD forms a non-homologous end joining (NHEJ) DNA repair enzyme, which repairs dsDNA breaks with reduced fidelity. Binds linear dsDNA with 5'- and 3'- overhangs but not closed circular dsDNA nor ssDNA. Recruits and stimulates the ligase activity of LigD. Probably involved in DNA repair during spore germination. The protein is Non-homologous end joining protein Ku of Bacillus subtilis (strain 168).